A 378-amino-acid polypeptide reads, in one-letter code: Acetylornithine deacetylase (378 aa).

Position 76 (histidine 76) interacts with Zn(2+). Aspartate 78 is a catalytic residue. Aspartate 108 serves as a coordination point for Zn(2+). The active site involves glutamate 140. Glutamate 141, glutamate 165, and histidine 351 together coordinate Zn(2+).

The protein belongs to the peptidase M20A family. ArgE subfamily. In terms of assembly, homodimer. It depends on Zn(2+) as a cofactor. Requires Co(2+) as cofactor. Glutathione serves as cofactor.

The protein localises to the cytoplasm. It catalyses the reaction N(2)-acetyl-L-ornithine + H2O = L-ornithine + acetate. The protein operates within amino-acid biosynthesis; L-arginine biosynthesis; L-ornithine from N(2)-acetyl-L-ornithine (linear): step 1/1. Functionally, catalyzes the hydrolysis of the amide bond of N(2)-acetylated L-amino acids. Cleaves the acetyl group from N-acetyl-L-ornithine to form L-ornithine, an intermediate in L-arginine biosynthesis pathway, and a branchpoint in the synthesis of polyamines. The sequence is that of Acetylornithine deacetylase from Vibrio cholerae serotype O1 (strain ATCC 39541 / Classical Ogawa 395 / O395).